A 184-amino-acid polypeptide reads, in one-letter code: ATP synthase subunit b, chloroplastic (184 aa).

The helical transmembrane segment at 27-49 (LATNLINLSVVLGVLIFFGKGVL) threads the bilayer.

This sequence belongs to the ATPase B chain family. As to quaternary structure, F-type ATPases have 2 components, F(1) - the catalytic core - and F(0) - the membrane proton channel. F(1) has five subunits: alpha(3), beta(3), gamma(1), delta(1), epsilon(1). F(0) has four main subunits: a(1), b(1), b'(1) and c(10-14). The alpha and beta chains form an alternating ring which encloses part of the gamma chain. F(1) is attached to F(0) by a central stalk formed by the gamma and epsilon chains, while a peripheral stalk is formed by the delta, b and b' chains.

It is found in the plastid. It localises to the chloroplast thylakoid membrane. F(1)F(0) ATP synthase produces ATP from ADP in the presence of a proton or sodium gradient. F-type ATPases consist of two structural domains, F(1) containing the extramembraneous catalytic core and F(0) containing the membrane proton channel, linked together by a central stalk and a peripheral stalk. During catalysis, ATP synthesis in the catalytic domain of F(1) is coupled via a rotary mechanism of the central stalk subunits to proton translocation. Functionally, component of the F(0) channel, it forms part of the peripheral stalk, linking F(1) to F(0). This is ATP synthase subunit b, chloroplastic from Helianthus annuus (Common sunflower).